Consider the following 1038-residue polypeptide: TonB-dependent receptor P39 (1038 aa).

Positions Met-1–Ala-39 are cleaved as a signal peptide. A TonB box motif is present at residues Asp-120–Tyr-127. The TBDR plug domain maps to Lys-131–Lys-243. The 790-residue stretch at Phe-249–Phe-1038 folds into the TBDR beta-barrel domain. The TonB C-terminal box signature appears at Ser-1021–Phe-1038.

This sequence belongs to the TonB-dependent receptor family.

The protein localises to the cell outer membrane. In terms of biological role, tonB-dependent receptor probably involved in ulvan degradation. Ulvan is the main polysaccharide component of the Ulvales (green seaweed) cell wall. It is composed of disaccharide building blocks comprising 3-sulfated rhamnose (Rha3S) linked to D-glucuronic acid (GlcA), L-iduronic acid (IduA), or D-xylose (Xyl). The TonB-dependent receptor may mediate transport of ulvan oligosaccharides from the surface of the outer membrane to the periplasm for subsequent degradation. The chain is TonB-dependent receptor P39 from Formosa agariphila (strain DSM 15362 / KCTC 12365 / LMG 23005 / KMM 3901 / M-2Alg 35-1).